A 610-amino-acid chain; its full sequence is Prolactin receptor (610 aa).

The N-terminal stretch at 1–19 is a signal peptide; the sequence is MPSALAFVLLVLNISLLKG. At 20–229 the chain is on the extracellular side; it reads QSPPGKPEIH…EMPNDFTLKD (210 aa). Fibronectin type-III domains lie at 22–122 and 124–224; these read PPGK…IVEP and PPRN…MPND. A disulfide bridge links cysteine 31 with cysteine 41. N-linked (GlcNAc...) asparagine glycosylation is present at asparagine 54. Residues cysteine 70 and cysteine 81 are joined by a disulfide bond. N-linked (GlcNAc...) asparagine glycans are attached at residues asparagine 99 and asparagine 127. The Zn(2+) site is built by aspartate 206 and histidine 207. Positions 210-214 match the WSXWS motif motif; that stretch reads WSRWS. Residues 230–253 traverse the membrane as a helical segment; it reads TTVWIIVAILSAVICLIMVWAVAL. At 254 to 610 the chain is on the cytoplasmic side; sequence KGYSMMTCIF…DPTCFMHSFH (357 aa). Positions 262–270 match the Box 1 motif motif; the sequence is IFPPVPGPK. Disordered regions lie at residues 317–355, 458–482, and 564–584; these read DERLMPSHSKEYPGQGVKPTHLDPDSDSGHGSYDSHSLL, TGEEEVAEQKGAKSFPSDKQNTPWP, and AKKAPPSFEADQSEKDLASFT. The span at 318 to 327 shows a compositional bias: basic and acidic residues; it reads ERLMPSHSKE. Low complexity predominate over residues 345–354; sequence GHGSYDSHSL.

This sequence belongs to the type I cytokine receptor family. Type 1 subfamily. As to quaternary structure, interacts with SMARCA1. Interacts with NEK3 and VAV2 and this interaction is prolactin-dependent.

It is found in the membrane. This is a receptor for the anterior pituitary hormone prolactin. This Rattus norvegicus (Rat) protein is Prolactin receptor (Prlr).